Consider the following 461-residue polypeptide: Argininosuccinate lyase (461 aa).

It belongs to the lyase 1 family. Argininosuccinate lyase subfamily.

The protein localises to the cytoplasm. It carries out the reaction 2-(N(omega)-L-arginino)succinate = fumarate + L-arginine. It participates in amino-acid biosynthesis; L-arginine biosynthesis; L-arginine from L-ornithine and carbamoyl phosphate: step 3/3. This Nitrosomonas europaea (strain ATCC 19718 / CIP 103999 / KCTC 2705 / NBRC 14298) protein is Argininosuccinate lyase.